Consider the following 546-residue polypeptide: CTP synthase (546 aa).

Residues Met-1–Ile-266 form an amidoligase domain region. Residue Ser-14 participates in CTP binding. Ser-14 is a UTP binding site. ATP contacts are provided by residues Ser-15 to Ile-20 and Asp-72. Mg(2+) is bound by residues Asp-72 and Glu-140. Residues Asp-147–Glu-149, Lys-187–Gln-192, and Lys-223 contribute to the CTP site. UTP is bound by residues Lys-187–Gln-192 and Lys-223. Positions Asn-291–Lys-544 constitute a Glutamine amidotransferase type-1 domain. Residue Gly-352 coordinates L-glutamine. The active-site Nucleophile; for glutamine hydrolysis is Cys-379. L-glutamine contacts are provided by residues Leu-380–Gln-383, Glu-403, and Arg-470. Active-site residues include His-517 and Glu-519.

It belongs to the CTP synthase family. In terms of assembly, homotetramer.

The enzyme catalyses UTP + L-glutamine + ATP + H2O = CTP + L-glutamate + ADP + phosphate + 2 H(+). It carries out the reaction L-glutamine + H2O = L-glutamate + NH4(+). It catalyses the reaction UTP + NH4(+) + ATP = CTP + ADP + phosphate + 2 H(+). It functions in the pathway pyrimidine metabolism; CTP biosynthesis via de novo pathway; CTP from UDP: step 2/2. With respect to regulation, allosterically activated by GTP, when glutamine is the substrate; GTP has no effect on the reaction when ammonia is the substrate. The allosteric effector GTP functions by stabilizing the protein conformation that binds the tetrahedral intermediate(s) formed during glutamine hydrolysis. Inhibited by the product CTP, via allosteric rather than competitive inhibition. Functionally, catalyzes the ATP-dependent amination of UTP to CTP with either L-glutamine or ammonia as the source of nitrogen. Regulates intracellular CTP levels through interactions with the four ribonucleotide triphosphates. This is CTP synthase from Wigglesworthia glossinidia brevipalpis.